The following is a 1400-amino-acid chain: DNA-directed RNA polymerase subunit beta' (1400 aa).

Zn(2+) is bound by residues Cys70, Cys72, Cys85, and Cys88. 3 residues coordinate Mg(2+): Asp460, Asp462, and Asp464. Zn(2+)-binding residues include Cys814, Cys888, Cys895, and Cys898.

The protein belongs to the RNA polymerase beta' chain family. As to quaternary structure, the RNAP catalytic core consists of 2 alpha, 1 beta, 1 beta' and 1 omega subunit. When a sigma factor is associated with the core the holoenzyme is formed, which can initiate transcription. Requires Mg(2+) as cofactor. Zn(2+) serves as cofactor.

It catalyses the reaction RNA(n) + a ribonucleoside 5'-triphosphate = RNA(n+1) + diphosphate. Its function is as follows. DNA-dependent RNA polymerase catalyzes the transcription of DNA into RNA using the four ribonucleoside triphosphates as substrates. This is DNA-directed RNA polymerase subunit beta' from Methylococcus capsulatus (strain ATCC 33009 / NCIMB 11132 / Bath).